Here is a 757-residue protein sequence, read N- to C-terminus: Transcription regulator rua1 (757 aa).

Disordered stretches follow at residues 122-169 (SSGS…LPVS), 181-218 (NHQV…SNQD), 237-295 (RNTG…NGYT), 372-393 (SADC…PYPL), and 422-582 (MELQ…IGNA). A compositionally biased stretch (low complexity) spans 125–165 (SATKSEPSTCSSSTDFSMSSTADASTAPQHSSSGDSSMSSG). Polar residues-rich tracts occupy residues 181-190 (NHQVTTQDAS) and 200-218 (QPPS…SNQD). A compositionally biased stretch (basic residues) spans 240 to 249 (GHRQHNRHQK). A compositionally biased stretch (polar residues) spans 253-277 (LPQGQSCTNSGSSSRQVTRPNSPNH). Residues 379–393 (PRPPSNSPEPHPYPL) show a composition bias toward pro residues. Over residues 428–437 (PARSNSTFGR) the composition is skewed to polar residues. Over residues 439–453 (SQRHHQPPPSHRQRS) the composition is skewed to basic residues. 3 stretches are compositionally biased toward low complexity: residues 454–465 (RTSASSISNTNA), 494–510 (ASQS…ATDA), and 543–582 (TSSS…IGNA). The segment at 661 to 692 (REGWCSLCPQGEWYSMKRSQYLYHMQFDHGIS) adopts a C2H2-type 1 degenerate zinc-finger fold. The segment at 717 to 750 (GLCHHCNKWIPICFGPQRKRDFKAWFKHARKCHR) adopts a C2H2-type 2; degenerate zinc-finger fold.

It localises to the nucleus. Its function is as follows. Transcription factor; part of the gene cluster that mediates the biosynthesis of the glycolipid biosurfactant ustilagic acid (UA). UA is a secreted cellobiose glycolipid that is toxic for many microorganisms and confers biocontrol activity to U.maydis. Recognizes and binds to the specific 5'-T/G-G/T-C-G-C-A-T-A/T-C/T-C/T-G/A-3' upstream activating sequence found in all promoters of the UA biosynthesis genes. In Mycosarcoma maydis (Corn smut fungus), this protein is Transcription regulator rua1.